Here is a 315-residue protein sequence, read N- to C-terminus: tRNA dimethylallyltransferase (315 aa).

14 to 21 (GATATGKS) serves as a coordination point for ATP. 16 to 21 (TATGKS) serves as a coordination point for substrate. An interaction with substrate tRNA region spans residues 39 to 42 (DSRQ).

It belongs to the IPP transferase family. As to quaternary structure, monomer. Mg(2+) serves as cofactor.

The catalysed reaction is adenosine(37) in tRNA + dimethylallyl diphosphate = N(6)-dimethylallyladenosine(37) in tRNA + diphosphate. Its function is as follows. Catalyzes the transfer of a dimethylallyl group onto the adenine at position 37 in tRNAs that read codons beginning with uridine, leading to the formation of N6-(dimethylallyl)adenosine (i(6)A). This is tRNA dimethylallyltransferase from Microcystis aeruginosa (strain NIES-843 / IAM M-2473).